The primary structure comprises 930 residues: Protein translocase subunit SecA (930 aa).

Residues Gln87, 105 to 109, and Asp516 contribute to the ATP site; that span reads GEGKT. Zn(2+)-binding residues include Cys914, Cys916, Cys925, and His926.

This sequence belongs to the SecA family. Monomer and homodimer. Part of the essential Sec protein translocation apparatus which comprises SecA, SecYEG and auxiliary proteins SecDF-YajC and YidC. Zn(2+) serves as cofactor.

It is found in the cell inner membrane. The protein resides in the cytoplasm. The enzyme catalyses ATP + H2O + cellular proteinSide 1 = ADP + phosphate + cellular proteinSide 2.. Part of the Sec protein translocase complex. Interacts with the SecYEG preprotein conducting channel. Has a central role in coupling the hydrolysis of ATP to the transfer of proteins into and across the cell membrane, serving both as a receptor for the preprotein-SecB complex and as an ATP-driven molecular motor driving the stepwise translocation of polypeptide chains across the membrane. The polypeptide is Protein translocase subunit SecA (Variovorax paradoxus (strain S110)).